The chain runs to 300 residues: Mycothiol acetyltransferase (300 aa).

N-acetyltransferase domains lie at 4–140 (IDWR…RPLT) and 151–300 (VRLA…AVAD). Asp-36 contributes to the 1D-myo-inositol 2-(L-cysteinylamino)-2-deoxy-alpha-D-glucopyranoside binding site. Position 79–81 (79–81 (LVV)) interacts with acetyl-CoA. Residues Glu-178, Lys-219, and Glu-227 each contribute to the 1D-myo-inositol 2-(L-cysteinylamino)-2-deoxy-alpha-D-glucopyranoside site. 231–233 (VGV) contributes to the acetyl-CoA binding site. Position 269 (Tyr-269) interacts with 1D-myo-inositol 2-(L-cysteinylamino)-2-deoxy-alpha-D-glucopyranoside. Acetyl-CoA is bound at residue 274-279 (NGAAVK).

It belongs to the acetyltransferase family. MshD subfamily. As to quaternary structure, monomer.

It catalyses the reaction 1D-myo-inositol 2-(L-cysteinylamino)-2-deoxy-alpha-D-glucopyranoside + acetyl-CoA = mycothiol + CoA + H(+). Catalyzes the transfer of acetyl from acetyl-CoA to desacetylmycothiol (Cys-GlcN-Ins) to form mycothiol. The chain is Mycothiol acetyltransferase from Mycobacterium sp. (strain JLS).